The chain runs to 214 residues: Phosphatidylserine decarboxylase proenzyme (214 aa).

Ser-182 acts as the Schiff-base intermediate with substrate; via pyruvic acid in catalysis. Residue Ser-182 is modified to Pyruvic acid (Ser); by autocatalysis.

This sequence belongs to the phosphatidylserine decarboxylase family. PSD-A subfamily. As to quaternary structure, heterodimer of a large membrane-associated beta subunit and a small pyruvoyl-containing alpha subunit. It depends on pyruvate as a cofactor. In terms of processing, is synthesized initially as an inactive proenzyme. Formation of the active enzyme involves a self-maturation process in which the active site pyruvoyl group is generated from an internal serine residue via an autocatalytic post-translational modification. Two non-identical subunits are generated from the proenzyme in this reaction, and the pyruvate is formed at the N-terminus of the alpha chain, which is derived from the carboxyl end of the proenzyme. The post-translation cleavage follows an unusual pathway, termed non-hydrolytic serinolysis, in which the side chain hydroxyl group of the serine supplies its oxygen atom to form the C-terminus of the beta chain, while the remainder of the serine residue undergoes an oxidative deamination to produce ammonia and the pyruvoyl prosthetic group on the alpha chain.

It is found in the cell membrane. The enzyme catalyses a 1,2-diacyl-sn-glycero-3-phospho-L-serine + H(+) = a 1,2-diacyl-sn-glycero-3-phosphoethanolamine + CO2. The protein operates within phospholipid metabolism; phosphatidylethanolamine biosynthesis; phosphatidylethanolamine from CDP-diacylglycerol: step 2/2. Catalyzes the formation of phosphatidylethanolamine (PtdEtn) from phosphatidylserine (PtdSer). This Solidesulfovibrio magneticus (strain ATCC 700980 / DSM 13731 / RS-1) (Desulfovibrio magneticus) protein is Phosphatidylserine decarboxylase proenzyme.